The chain runs to 160 residues: Single-stranded DNA-binding protein 2 (160 aa).

The 103-residue stretch at M2–E104 folds into the SSB domain. The segment at N107 to F160 is disordered. The span at S115–Q129 shows a compositional bias: low complexity. A compositionally biased stretch (polar residues) spans T130–F144. The short motif at E155–F160 is the Important for interaction with partner proteins element.

Homotetramer.

Its function is as follows. Plays an important role in DNA replication, recombination and repair. Binds to ssDNA and to an array of partner proteins to recruit them to their sites of action during DNA metabolism. The protein is Single-stranded DNA-binding protein 2 (ssb2) of Listeria monocytogenes serovar 1/2a (strain ATCC BAA-679 / EGD-e).